The primary structure comprises 861 residues: Leucine--tRNA ligase (861 aa).

The 'HIGH' region signature appears at 42–52 (PYPSGRLHMGH). Residues 619–623 (KMSKS) carry the 'KMSKS' region motif. An ATP-binding site is contributed by Lys-622.

The protein belongs to the class-I aminoacyl-tRNA synthetase family.

It localises to the cytoplasm. The enzyme catalyses tRNA(Leu) + L-leucine + ATP = L-leucyl-tRNA(Leu) + AMP + diphosphate. This Haemophilus influenzae (strain PittGG) protein is Leucine--tRNA ligase.